The following is a 376-amino-acid chain: UDP-N-acetylglucosamine--N-acetylmuramyl-(pentapeptide) pyrophosphoryl-undecaprenol N-acetylglucosamine transferase (376 aa).

UDP-N-acetyl-alpha-D-glucosamine-binding positions include 11-13 (TGG), N117, R160, S208, and Q310.

The protein belongs to the glycosyltransferase 28 family. MurG subfamily.

It is found in the cell inner membrane. The catalysed reaction is di-trans,octa-cis-undecaprenyl diphospho-N-acetyl-alpha-D-muramoyl-L-alanyl-D-glutamyl-meso-2,6-diaminopimeloyl-D-alanyl-D-alanine + UDP-N-acetyl-alpha-D-glucosamine = di-trans,octa-cis-undecaprenyl diphospho-[N-acetyl-alpha-D-glucosaminyl-(1-&gt;4)]-N-acetyl-alpha-D-muramoyl-L-alanyl-D-glutamyl-meso-2,6-diaminopimeloyl-D-alanyl-D-alanine + UDP + H(+). Its pathway is cell wall biogenesis; peptidoglycan biosynthesis. Its function is as follows. Cell wall formation. Catalyzes the transfer of a GlcNAc subunit on undecaprenyl-pyrophosphoryl-MurNAc-pentapeptide (lipid intermediate I) to form undecaprenyl-pyrophosphoryl-MurNAc-(pentapeptide)GlcNAc (lipid intermediate II). The polypeptide is UDP-N-acetylglucosamine--N-acetylmuramyl-(pentapeptide) pyrophosphoryl-undecaprenol N-acetylglucosamine transferase (Rickettsia rickettsii (strain Iowa)).